We begin with the raw amino-acid sequence, 922 residues long: Golgi-associated RAB2 interactor protein 5B (922 aa).

6 disordered regions span residues aspartate 244 to histidine 264, glutamine 292 to histidine 317, threonine 373 to serine 404, alanine 424 to threonine 597, glutamine 758 to serine 830, and alanine 842 to valine 869. Polar residues predominate over residues glutamine 292 to alanine 305. Residues lysine 431–lysine 441 show a composition bias toward pro residues. 2 stretches are compositionally biased toward low complexity: residues alanine 442–proline 458 and lysine 471–valine 495. The segment covering proline 496–glutamine 507 has biased composition (pro residues). The span at glutamine 758–tryptophan 788 shows a compositional bias: basic and acidic residues.

This sequence belongs to the GARIN family.

This is Golgi-associated RAB2 interactor protein 5B from Homo sapiens (Human).